The primary structure comprises 351 residues: Putative [LysW]-L-2-aminoadipate/[LysW]-L-glutamate phosphate reductase (351 aa).

Residues 10–13 and 34–36 each bind NADP(+); these read SGFT and SRK. Cys-151 is an active-site residue. Asn-318 contacts NADP(+).

Belongs to the NAGSA dehydrogenase family. Type 1 subfamily. LysY sub-subfamily.

The protein localises to the cytoplasm. It carries out the reaction [amino-group carrier protein]-C-terminal-N-(1-carboxy-5-oxopentan-1-yl)-L-glutamine + phosphate + NADP(+) = [amino-group carrier protein]-C-terminal-N-(1-carboxy-5-phosphooxy-5-oxopentan-1-yl)-L-glutamine + NADPH + H(+). The catalysed reaction is [amino-group carrier protein]-C-terminal-gamma-(L-glutamyl-5-semialdehyde)-L-glutamate + phosphate + NADP(+) = [amino-group carrier protein]-C-terminal-gamma-(5-phospho-L-glutamyl)-L-glutamate + NADPH + H(+). Its pathway is amino-acid biosynthesis; L-lysine biosynthesis via AAA pathway; L-lysine from L-alpha-aminoadipate (Thermus route): step 3/5. The protein operates within amino-acid biosynthesis; L-arginine biosynthesis. Involved in both the arginine and lysine biosynthetic pathways. The polypeptide is Putative [LysW]-L-2-aminoadipate/[LysW]-L-glutamate phosphate reductase (Pyrobaculum calidifontis (strain DSM 21063 / JCM 11548 / VA1)).